Reading from the N-terminus, the 434-residue chain is Methylenetetrahydrofolate--tRNA-(uracil-5-)-methyltransferase TrmFO (434 aa).

An FAD-binding site is contributed by 10–15; sequence GAGLAG.

This sequence belongs to the MnmG family. TrmFO subfamily. FAD is required as a cofactor.

It localises to the cytoplasm. It catalyses the reaction uridine(54) in tRNA + (6R)-5,10-methylene-5,6,7,8-tetrahydrofolate + NADH + H(+) = 5-methyluridine(54) in tRNA + (6S)-5,6,7,8-tetrahydrofolate + NAD(+). The catalysed reaction is uridine(54) in tRNA + (6R)-5,10-methylene-5,6,7,8-tetrahydrofolate + NADPH + H(+) = 5-methyluridine(54) in tRNA + (6S)-5,6,7,8-tetrahydrofolate + NADP(+). In terms of biological role, catalyzes the folate-dependent formation of 5-methyl-uridine at position 54 (M-5-U54) in all tRNAs. This Bacillus anthracis (strain A0248) protein is Methylenetetrahydrofolate--tRNA-(uracil-5-)-methyltransferase TrmFO.